The chain runs to 459 residues: MTTRNTIILAAGKGTRMKSKLYKVLHKVCGKAMVDHVLTQVEKTDMSKIVTVVGYGADEVKSTLGDRTQYALQAEQLGTGHAVLQTEPMLKDEAGTTLIVSGDTPLFRAETFEDLFAYHEAKHAAATILTSMAPDPTGYGRIVRNNIGIVEKIVEQKDANSEEQEIHEINTGVYVFDNQKLFKALHETSNDNAQGEYYLTDVIEILKQQGDIVAAYQMANFDESMGVNDRVALSAATKIMRDRINEAHMRDGVTLIDPATTYIDAGVKIGADTIIEPGVLLKGNTVIGEDCYIGAHSELRNAVLADHVTVTSSLLEDSDMASGSNIGPNSHLRPESHIGPKVHLGNFVEVKKATIGEGTKVGHLTYVGNAKLGRNINVGCGVVFVNYDGKNKHETVVGDDAFIGSNSNLVAPLDVADHSFIAAGSTITDAVNRYDMAIARQRQTNKPNYYQKLPYRGED.

Residues 1–230 are pyrophosphorylase; sequence MTTRNTIILA…FDESMGVNDR (230 aa). Residues 9 to 12, Lys-23, Gln-73, 78 to 79, 101 to 103, Gly-140, Glu-155, Asn-170, and Asn-228 contribute to the UDP-N-acetyl-alpha-D-glucosamine site; these read LAAG, GT, and SGD. Asp-103 is a Mg(2+) binding site. Mg(2+) is bound at residue Asn-228. The tract at residues 231-251 is linker; the sequence is VALSAATKIMRDRINEAHMRD. The N-acetyltransferase stretch occupies residues 252–459; the sequence is GVTLIDPATT…YQKLPYRGED (208 aa). UDP-N-acetyl-alpha-D-glucosamine contacts are provided by Arg-333 and Lys-351. The active-site Proton acceptor is the His-363. Tyr-366 and Asn-377 together coordinate UDP-N-acetyl-alpha-D-glucosamine. Acetyl-CoA is bound by residues 386–387, Ser-405, Ala-423, and Arg-440; that span reads NY.

This sequence in the N-terminal section; belongs to the N-acetylglucosamine-1-phosphate uridyltransferase family. It in the C-terminal section; belongs to the transferase hexapeptide repeat family. In terms of assembly, homotrimer. Requires Mg(2+) as cofactor.

It is found in the cytoplasm. It catalyses the reaction alpha-D-glucosamine 1-phosphate + acetyl-CoA = N-acetyl-alpha-D-glucosamine 1-phosphate + CoA + H(+). It carries out the reaction N-acetyl-alpha-D-glucosamine 1-phosphate + UTP + H(+) = UDP-N-acetyl-alpha-D-glucosamine + diphosphate. The protein operates within nucleotide-sugar biosynthesis; UDP-N-acetyl-alpha-D-glucosamine biosynthesis; N-acetyl-alpha-D-glucosamine 1-phosphate from alpha-D-glucosamine 6-phosphate (route II): step 2/2. Its pathway is nucleotide-sugar biosynthesis; UDP-N-acetyl-alpha-D-glucosamine biosynthesis; UDP-N-acetyl-alpha-D-glucosamine from N-acetyl-alpha-D-glucosamine 1-phosphate: step 1/1. It functions in the pathway bacterial outer membrane biogenesis; LPS lipid A biosynthesis. Its function is as follows. Catalyzes the last two sequential reactions in the de novo biosynthetic pathway for UDP-N-acetylglucosamine (UDP-GlcNAc). The C-terminal domain catalyzes the transfer of acetyl group from acetyl coenzyme A to glucosamine-1-phosphate (GlcN-1-P) to produce N-acetylglucosamine-1-phosphate (GlcNAc-1-P), which is converted into UDP-GlcNAc by the transfer of uridine 5-monophosphate (from uridine 5-triphosphate), a reaction catalyzed by the N-terminal domain. The sequence is that of Bifunctional protein GlmU from Levilactobacillus brevis (strain ATCC 367 / BCRC 12310 / CIP 105137 / JCM 1170 / LMG 11437 / NCIMB 947 / NCTC 947) (Lactobacillus brevis).